The primary structure comprises 376 residues: Cinnamyl alcohol dehydrogenase 2 (376 aa).

Position 44 (C44) interacts with Zn(2+). NADP(+) is bound at residue S46. H66, E67, C97, C100, C103, C111, and C161 together coordinate Zn(2+). Residues T165, 187 to 192 (GLGGLG), 210 to 215 (SRSSEK), T250, G274, and 297 to 299 (SQI) each bind NADP(+).

The protein belongs to the zinc-containing alcohol dehydrogenase family. In terms of assembly, homodimer. Zn(2+) is required as a cofactor. Expressed at the base of the stems.

The catalysed reaction is (E)-cinnamyl alcohol + NADP(+) = (E)-cinnamaldehyde + NADPH + H(+). It carries out the reaction (E)-coniferol + NADP(+) = (E)-coniferaldehyde + NADPH + H(+). The enzyme catalyses (E)-sinapyl alcohol + NADP(+) = (E)-sinapaldehyde + NADPH + H(+). It catalyses the reaction (E)-4-coumaroyl alcohol + NADP(+) = (E)-4-coumaraldehyde + NADPH + H(+). The catalysed reaction is (E)-caffeyl alcohol + NADP(+) = (E)-caffeyl aldehyde + NADPH + H(+). The protein operates within aromatic compound metabolism; phenylpropanoid biosynthesis. Functionally, involved in lignin biosynthesis. Catalyzes the final step specific for the production of lignin monomers. Catalyzes the NADPH-dependent reduction of coniferaldehyde, 5-hydroxyconiferaldehyde, sinapaldehyde, 4-coumaraldehyde and caffeyl aldehyde to their respective alcohols. The protein is Cinnamyl alcohol dehydrogenase 2 of Arabidopsis thaliana (Mouse-ear cress).